We begin with the raw amino-acid sequence, 502 residues long: Calnexin homolog (502 aa).

The first 19 residues, 1–19 (MKFSAYLWWLFLNLALVKG), serve as a signal peptide directing secretion. Residues 20 to 481 (TSLLSNVTLA…IDRILEQPLK (462 aa)) are Lumenal-facing. N-linked (GlcNAc...) asparagine glycans are attached at residues asparagine 25 and asparagine 104. A disulfide bridge links cysteine 125 with cysteine 161. Residues lysine 131 and aspartate 159 each contribute to the an alpha-D-glucoside site. The tract at residues 248–381 (IPDVSVAKPH…PEIENPLYYE (134 aa)) is p domain (Extended arm). Repeat copies occupy residues 250-261 (DVSVAKPHDWDD), 267-278 (DPEAVKLSDRDE), 286-297 (HPDGTEPPEWNS), 305-316 (DPNAQKPSWWKE), and 320-330 (GEWIPPMIKNP). 4 X approximate repeats regions lie at residues 250 to 316 (DVSV…WWKE) and 320 to 377 (GEWI…IENP). An N-linked (GlcNAc...) asparagine glycan is attached at asparagine 296. A disulfide bond links cysteine 332 and cysteine 338. 3 consecutive repeat copies span residues 339–349 (GQQIPGLINNA), 353–363 (GPGELNEIINP), and 367–377 (GEWHPPEIENP). Glutamate 398 is an an alpha-D-glucoside binding site. Residues asparagine 416 and asparagine 425 are each glycosylated (N-linked (GlcNAc...) asparagine). A helical membrane pass occupies residues 482 to 502 (FVLTAAVVLLTTSVLCCVVFT).

This sequence belongs to the calreticulin family. Interacts with MPD1.

The protein resides in the endoplasmic reticulum membrane. In terms of biological role, interacts with newly synthesized monoglucosylated glycoproteins in the endoplasmic reticulum. It may act in assisting protein assembly and/or in the retention within the ER of unassembled protein subunits. It seems to play a major role in the quality control apparatus of the ER by the retention of incorrectly folded proteins. The protein is Calnexin homolog (CNE1) of Saccharomyces cerevisiae (strain ATCC 204508 / S288c) (Baker's yeast).